The sequence spans 1150 residues: C5a peptidase (1150 aa).

Positions 1–31 (MRKKQKLPFDKLAIALMSTSILLNAQSDIKA) are cleaved as a signal peptide. Residues 33 to 73 (TVTEDTPAAEQAVETPQPTAVSEEVPSSKETKTPQTPDNAE) are disordered. The 483-residue stretch at 99 to 581 (KATIRDLNDP…AGAVDAKKAS (483 aa)) folds into the Peptidase S8 domain. Residues aspartate 130, histidine 193, and serine 512 each act as charge relay system in the active site. Basic and acidic residues-rich tracts occupy residues 1029 to 1054 (EGHS…KPEQ) and 1061 to 1073 (PDKK…EKDS). The tract at residues 1029–1116 (EGHSNKPEQD…RDQLPTTNDK (88 aa)) is disordered. A run of 3 repeats spans residues 1034 to 1050 (KPEQ…KPEA), 1051 to 1067 (KPEQ…KPET), and 1068 to 1084 (KPEK…TPQK). The tract at residues 1034–1084 (KPEQDGSDQAPDKKPEAKPEQDGSGQTPDKKPETKPEKDSSGQTPGKTPQK) is 3 X 17 AA tandem repeats. The segment covering 1075–1089 (GQTPGKTPQKGQPSR) has biased composition (polar residues). An LPXTG sorting signal motif is present at residues 1110–1114 (LPTTN). Threonine 1113 is modified (pentaglycyl murein peptidoglycan amidated threonine). A propeptide spans 1114 to 1150 (NDKDTNRLHLLKLVMTTFFFGLVAHIFKTKRQKETKK) (removed by sortase).

The protein belongs to the peptidase S8 family. Cleaved by SpeB protease; leading to its degradation. Degradation by SpeB is probably strictly regulated to preserve integrity of C5a peptidase.

The protein localises to the secreted. It is found in the cell wall. The enzyme catalyses The primary cleavage site is at 67-His-|-Lys-68 in human C5a with a minor secondary cleavage site at 58-Ala-|-Ser-59.. In terms of biological role, this virulence factor of S.pyogenes specifically cleaves the human serum chemotaxin C5a at '68-Lys-|-Asp-69' bond near its C-terminus, destroying its ability to serve as a chemoattractant. This chain is C5a peptidase (scpA), found in Streptococcus pyogenes serotype M18 (strain MGAS8232).